Here is a 320-residue protein sequence, read N- to C-terminus: MESGETLLKKLDGKLSGLRGRLTPDTGMDKITWFRAGGPAQVLFQPADEEDLSSFLKAVPEEVPILVVGIGSNLLVRDGGVPGFVVRLSAKGFGEVDQVSETQLRAGAATPDKRVAAAALEAGLAGFHFYHGIPGGMGGALRMNAGANGVETRERVVEVRALDRKGEVHVLSNADMGYAYRHSSASSDLIFTSVLFEGTPGEHEAIKQAMDEVQHHRETVQPVREKTGGSTFKNPEGTSAWKEIDKAGCRGLRVGGAQMSEMHCNFMINTGTATGLDLETLGETVRARVFENSGIRLHWEIKRLGLFREGEAVEEFLGKF.

An FAD-binding PCMH-type domain is found at 35-216 (RAGGPAQVLF…KQAMDEVQHH (182 aa)). Arginine 181 is an active-site residue. Serine 230 functions as the Proton donor in the catalytic mechanism. The active site involves glutamate 300.

Belongs to the MurB family. The cofactor is FAD.

The protein resides in the cytoplasm. The enzyme catalyses UDP-N-acetyl-alpha-D-muramate + NADP(+) = UDP-N-acetyl-3-O-(1-carboxyvinyl)-alpha-D-glucosamine + NADPH + H(+). Its pathway is cell wall biogenesis; peptidoglycan biosynthesis. Functionally, cell wall formation. The sequence is that of UDP-N-acetylenolpyruvoylglucosamine reductase from Brucella anthropi (strain ATCC 49188 / DSM 6882 / CCUG 24695 / JCM 21032 / LMG 3331 / NBRC 15819 / NCTC 12168 / Alc 37) (Ochrobactrum anthropi).